The primary structure comprises 4115 residues: Transcription-associated protein 1 (4115 aa).

A compositionally biased stretch (polar residues) spans 1-11 (MDPSIPSTSHR). Disordered stretches follow at residues 1–21 (MDPSIPSTSHRSVPPDRGVQP) and 543–563 (ESEQKRNELPTPTKEHTKKTS). The span at 544 to 563 (SEQKRNELPTPTKEHTKKTS) shows a compositional bias: basic and acidic residues. 2 TPR repeats span residues 1341 to 1374 (LDGLQRFVFICPEGFEFEKDSEIYKRYLVHLLDL) and 1820 to 1853 (QDYDMFFNVVSVFMGKFQTDFTFVREYLEVEVIP). The disordered stretch occupies residues 2678–2701 (LEEPEPMEVDQPKNAPAEEPKDNK). An FAT domain is found at 2808 to 3421 (LIEFISSKHE…SNGASKVSKS (614 aa)). A TPR 3 repeat occupies 2855-2888 (IETLESLGALYKELAEFDQYSAIWERRSVFPETM). In terms of domain architecture, PI3K/PI4K catalytic spans 3740–4100 (EPYFEIVMRG…CNSLIIRAKD (361 aa)). Residues 3746-3752 (VMRGGQV) form a G-loop region. Residues 3959–3967 (NLSPMTPHQ) form a catalytic loop region. The activation loop stretch occupies residues 3979-4006 (NPFYRFELGTGQLMDIEHFAHEVPFRLT). Residues 4083 to 4115 (DAKVKKDDCNSLIIRAKDSDNLSRMPPTYHAWF) enclose the FATC domain.

Belongs to the PI3/PI4-kinase family. TRA1 subfamily.

It localises to the nucleus. Its function is as follows. Influences germ cell fate in hermaphrodites. Acts downstream of tra-2 and tra-3 and through the Tip60 histone acetyltransferase complex to regulate germ cell fate decisions. Required for spermatogenesis and embryonic development. Acts with tra-2 to promote expression of fog-3 and control male tail development. Involved in the negative regulation of vulval development. This is Transcription-associated protein 1 from Caenorhabditis briggsae.